Reading from the N-terminus, the 101-residue chain is MRFASLFVVYCTFMFLDISHVKCEVEPVPYCKVITWYDVKCGADGNKTCVDHLIKGHIYDVPVCDCSELTTSGILCTCQHRFPCKEPPPLHRISIRKQIRG.

Residues 1 to 23 (MRFASLFVVYCTFMFLDISHVKC) form the signal peptide. 4 disulfide bridges follow: C31/C84, C41/C66, C49/C76, and C64/C78.

Belongs to the DEFL family.

It is found in the secreted. The sequence is that of Putative defensin-like protein 253 (SCRL15) from Arabidopsis thaliana (Mouse-ear cress).